The chain runs to 411 residues: Corticotropin-releasing factor receptor 2 (411 aa).

Positions 1-19 form a signal peptide, not cleaved; sequence MDAALLHSLLEANCSLALA. Residues 1-108 lie on the Extracellular side of the membrane; sequence MDAALLHSLL…EPILDDKQRK (108 aa). Residues asparagine 13, asparagine 41, asparagine 74, asparagine 86, and asparagine 94 are each glycosylated (N-linked (GlcNAc...) asparagine). Cystine bridges form between cysteine 14–cysteine 50, cysteine 40–cysteine 83, tryptophan 51–arginine 77, and cysteine 64–cysteine 98. The chain crosses the membrane as a helical span at residues 109-139; it reads YDLHYRIALVVNYLGHCVSVAALVAAFLLFL. Residues 140 to 146 lie on the Cytoplasmic side of the membrane; sequence ALRSIRC. Residues 147–171 traverse the membrane as a helical segment; it reads LRNVIHWNLITTFILRNVMWFLLQL. Topologically, residues 172–185 are extracellular; it reads VDHEVHESNEVWCR. A disulfide bond links cysteine 184 and cysteine 254. Residues 186 to 214 form a helical membrane-spanning segment; it reads CITTIFNYFVVTNFFWMFVEGCYLHTAIV. Residues 215 to 221 lie on the Cytoplasmic side of the membrane; it reads MTYSTER. A helical membrane pass occupies residues 222–249; sequence LRKCLFLFIGWCIPFPIIVAWAIGKLYY. The Extracellular portion of the chain corresponds to 250-265; that stretch reads ENEQCWFGKEPGDLVD. The helical transmembrane segment at 266–291 threads the bilayer; sequence YIYQGPIILVLLINFVFLFNIVRILM. Residues 292 to 302 lie on the Cytoplasmic side of the membrane; the sequence is TKLRASTTSET. Residues 303–327 traverse the membrane as a helical segment; it reads IQYRKAVKATLVLLPLLGITYMLFF. Residues 328–334 lie on the Extracellular side of the membrane; that stretch reads VNPGEDD. A helical membrane pass occupies residues 335-364; the sequence is LSQIMFIYFNSFLQSFQGFFVSVFYCFFNG. Over 365-411 the chain is Cytoplasmic; the sequence is EVRSAVRKRWHRWQDHHSLRVPMARAMSIPTSPTRISFHSIKQTAAV.

This sequence belongs to the G-protein coupled receptor 2 family. In terms of assembly, monomer. Interacts (via N-terminal extracellular domain) with CRF, UCN, UCN2 and UCN3. Has highest affinity for UCN, and considerably lower affinity for CRF, UNC2 and UCN3. Post-translationally, a N-glycosylation site within the signal peptide impedes its proper cleavage and function.

The protein localises to the cell membrane. G-protein coupled receptor for CRH (corticotropin-releasing factor), UCN (urocortin), UCN2 and UCN3. Has high affinity for UCN. Ligand binding causes a conformation change that triggers signaling via guanine nucleotide-binding proteins (G proteins) and down-stream effectors, such as adenylate cyclase. Promotes the activation of adenylate cyclase, leading to increased intracellular cAMP levels. The protein is Corticotropin-releasing factor receptor 2 (CRHR2) of Homo sapiens (Human).